A 270-amino-acid chain; its full sequence is Short chain dehydrogenase/reductase dpfgG (270 aa).

NADP(+)-binding residues include Ile-18, Asp-69, Asn-96, Lys-130, Lys-171, Ile-200, and Asn-204. Lys-171 acts as the Lowers pKa of active site Tyr in catalysis.

This sequence belongs to the short-chain dehydrogenases/reductases (SDR) family.

It functions in the pathway secondary metabolite biosynthesis; terpenoid biosynthesis. In terms of biological role, short chain dehydrogenase/reductase; part of the gene cluster that mediates the biosynthesis of diterpenoid pyrones. The first step of the pathway is the synthesis of the alpha-pyrone moiety by the polyketide synthase dpfgA via condensation of one acetyl-CoA starter unit with 3 malonyl-CoA units and 2 methylations. The alpha-pyrone is then combined with geranylgeranyl pyrophosphate (GGPP) formed by the GGPP synthase dpfgD through the action of the prenyltransferase dpfgC to yield a linear alpha-pyrone diterpenoid. Subsequent steps in the diterpenoid pyrone biosynthetic pathway involve the decalin core formation, which is initiated by the epoxidation of the C10-C11 olefin by the FAD-dependent oxidoreductase dpfgE, and is followed by a cyclization cascade catalyzed by the terpene cyclase dpfgB. The short chain dehydrogenase/reductase dpfgG then oxidizes the 8S hydroxy group to a ketone and the short chain dehydrogenase/reductase dpfgH reduces the ketone to the 8R hydroxy group to yield higginsianin B. Higginsianin B is further methylated by the methyltransferase dpfgI to produce the intermediate named FDDP B. The cytochrome P450 monooxygenase dfgpJ then catalyzes a three-step oxidation at C-27 to generate a carboxylic acid as well as C-26 hydroxylation. Finally, methyltransferase dpfgK methylates the carboxylic acid generated by dpfgJ, yielding the final diterpenoid pyrones from the pathway which were named FDDP D and FDDP E. The sequence is that of Short chain dehydrogenase/reductase dpfgG from Gibberella zeae (strain ATCC MYA-4620 / CBS 123657 / FGSC 9075 / NRRL 31084 / PH-1) (Wheat head blight fungus).